The chain runs to 245 residues: MRYKITIEYNGSNFIGWQKQKHSSNSIQEILENAILKFSQQHTTVYVAGRTDAGVHALGQVAHFDLTTNLDTYVVRNAINYHLIPHAIAILSVEKTDDKFHARFSAKKRHYLYKIINRYSPLTIDYNRAWLIHNPLNIENMIQAIEYIKGNHDFSSFRARHCQSKNPIKTIDDLKIIHNNQSINIHISAISFLHHQVRIIVGTLVECGKNNFSPEHIKNILKAKNRSYAGMTAPPYGLYFVKVDY.

Residue Asp-52 is the Nucleophile of the active site. Tyr-111 serves as a coordination point for substrate.

Belongs to the tRNA pseudouridine synthase TruA family. In terms of assembly, homodimer.

It carries out the reaction uridine(38/39/40) in tRNA = pseudouridine(38/39/40) in tRNA. Its function is as follows. Formation of pseudouridine at positions 38, 39 and 40 in the anticodon stem and loop of transfer RNAs. The sequence is that of tRNA pseudouridine synthase A from Ehrlichia chaffeensis (strain ATCC CRL-10679 / Arkansas).